A 40-amino-acid polypeptide reads, in one-letter code: Photosystem I reaction center subunit IX (40 aa).

The chain crosses the membrane as a helical span at residues 12 to 34; sequence APVLLTAWMSLTAGMIIEIQRFF.

Belongs to the PsaJ family.

Its subcellular location is the plastid. The protein resides in the chloroplast thylakoid membrane. May help in the organization of the PsaE and PsaF subunits. This is Photosystem I reaction center subunit IX from Emiliania huxleyi (Coccolithophore).